A 178-amino-acid chain; its full sequence is ATP synthase subunit delta (178 aa).

The protein belongs to the ATPase delta chain family. In terms of assembly, F-type ATPases have 2 components, F(1) - the catalytic core - and F(0) - the membrane proton channel. F(1) has five subunits: alpha(3), beta(3), gamma(1), delta(1), epsilon(1). F(0) has three main subunits: a(1), b(2) and c(10-14). The alpha and beta chains form an alternating ring which encloses part of the gamma chain. F(1) is attached to F(0) by a central stalk formed by the gamma and epsilon chains, while a peripheral stalk is formed by the delta and b chains.

The protein localises to the cell membrane. Its function is as follows. F(1)F(0) ATP synthase produces ATP from ADP in the presence of a proton or sodium gradient. F-type ATPases consist of two structural domains, F(1) containing the extramembraneous catalytic core and F(0) containing the membrane proton channel, linked together by a central stalk and a peripheral stalk. During catalysis, ATP synthesis in the catalytic domain of F(1) is coupled via a rotary mechanism of the central stalk subunits to proton translocation. This protein is part of the stalk that links CF(0) to CF(1). It either transmits conformational changes from CF(0) to CF(1) or is implicated in proton conduction. This is ATP synthase subunit delta from Streptococcus pyogenes serotype M1.